The sequence spans 344 residues: L-lactate dehydrogenase B (344 aa).

NAD(+) is bound by residues 62–67 (DALPDK) and Arg109. Residues Arg116, Asn148, and Arg179 each coordinate substrate. Asn148 is an NAD(+) binding site. His203 (proton acceptor) is an active-site residue. Thr258 serves as a coordination point for substrate.

The protein belongs to the LDH/MDH superfamily. LDH family. Tetramer that arise from random association of LDH-A and LDH-B.

The catalysed reaction is (S)-lactate + NAD(+) = pyruvate + NADH + H(+). It functions in the pathway fermentation; pyruvate fermentation to lactate; (S)-lactate from pyruvate: step 1/1. In Hordeum vulgare (Barley), this protein is L-lactate dehydrogenase B.